Here is a 376-residue protein sequence, read N- to C-terminus: Flap endonuclease 1 (376 aa).

Residues 1-105 form an N-domain region; the sequence is MGIKGLSKLL…GELHKRKENA (105 aa). Aspartate 34 is a binding site for Mg(2+). Positions 47 and 71 each coordinate DNA. Mg(2+)-binding residues include aspartate 87, glutamate 159, glutamate 161, aspartate 180, and aspartate 182. An I-domain region spans residues 123–254; the sequence is QAKKLMKRTA…ITAFELIQQY (132 aa). DNA is bound at residue glutamate 159. Residues glycine 232 and aspartate 234 each coordinate DNA. Position 234 (aspartate 234) interacts with Mg(2+). The interval 336–344 is interaction with PCNA; that stretch reads AQGRLDSFF. Residues 354–376 are disordered; the sequence is SEAASGVKRKKPTTKAKESRKKK. Residues 360-376 show a composition bias toward basic residues; that stretch reads VKRKKPTTKAKESRKKK.

It belongs to the XPG/RAD2 endonuclease family. FEN1 subfamily. As to quaternary structure, interacts with PCNA. Three molecules of FEN1 bind to one PCNA trimer with each molecule binding to one PCNA monomer. PCNA stimulates the nuclease activity without altering cleavage specificity. It depends on Mg(2+) as a cofactor. Phosphorylated. Phosphorylation upon DNA damage induces relocalization to the nuclear plasma.

The protein localises to the nucleus. It localises to the nucleolus. Its subcellular location is the nucleoplasm. It is found in the mitochondrion. Its function is as follows. Structure-specific nuclease with 5'-flap endonuclease and 5'-3' exonuclease activities involved in DNA replication and repair. During DNA replication, cleaves the 5'-overhanging flap structure that is generated by displacement synthesis when DNA polymerase encounters the 5'-end of a downstream Okazaki fragment. It enters the flap from the 5'-end and then tracks to cleave the flap base, leaving a nick for ligation. Also involved in the long patch base excision repair (LP-BER) pathway, by cleaving within the apurinic/apyrimidinic (AP) site-terminated flap. Acts as a genome stabilization factor that prevents flaps from equilibrating into structures that lead to duplications and deletions. Also possesses 5'-3' exonuclease activity on nicked or gapped double-stranded DNA, and exhibits RNase H activity. Also involved in replication and repair of rDNA and in repairing mitochondrial DNA. The polypeptide is Flap endonuclease 1 (Entamoeba histolytica (strain ATCC 30459 / HM-1:IMSS / ABRM)).